A 301-amino-acid chain; its full sequence is Porphobilinogen deaminase (301 aa).

Cysteine 242 carries the S-(dipyrrolylmethanemethyl)cysteine modification.

Belongs to the HMBS family. In terms of assembly, monomer. Dipyrromethane is required as a cofactor.

It carries out the reaction 4 porphobilinogen + H2O = hydroxymethylbilane + 4 NH4(+). The protein operates within porphyrin-containing compound metabolism; protoporphyrin-IX biosynthesis; coproporphyrinogen-III from 5-aminolevulinate: step 2/4. Its function is as follows. Tetrapolymerization of the monopyrrole PBG into the hydroxymethylbilane pre-uroporphyrinogen in several discrete steps. The polypeptide is Porphobilinogen deaminase (Rickettsia akari (strain Hartford)).